A 114-amino-acid chain; its full sequence is ATP synthase subunit c (114 aa).

A run of 2 helical transmembrane segments spans residues 31-51 (AVFY…AAGG) and 88-108 (IETF…TGIF).

The protein belongs to the ATPase C chain family. In terms of assembly, F-type ATPases have 2 components, F(1) - the catalytic core - and F(0) - the membrane proton channel. F(1) has five subunits: alpha(3), beta(3), gamma(1), delta(1), epsilon(1). F(0) has three main subunits: a(1), b(2) and c(10-14). The alpha and beta chains form an alternating ring which encloses part of the gamma chain. F(1) is attached to F(0) by a central stalk formed by the gamma and epsilon chains, while a peripheral stalk is formed by the delta and b chains.

The protein resides in the cell inner membrane. In terms of biological role, f(1)F(0) ATP synthase produces ATP from ADP in the presence of a proton or sodium gradient. F-type ATPases consist of two structural domains, F(1) containing the extramembraneous catalytic core and F(0) containing the membrane proton channel, linked together by a central stalk and a peripheral stalk. During catalysis, ATP synthesis in the catalytic domain of F(1) is coupled via a rotary mechanism of the central stalk subunits to proton translocation. Key component of the F(0) channel; it plays a direct role in translocation across the membrane. A homomeric c-ring of between 10-14 subunits forms the central stalk rotor element with the F(1) delta and epsilon subunits. This Sulfurihydrogenibium sp. (strain YO3AOP1) protein is ATP synthase subunit c.